Consider the following 360-residue polypeptide: DNA replication and repair protein RecF (360 aa).

An ATP-binding site is contributed by 30-37; it reads GQNGSGKT.

This sequence belongs to the RecF family.

The protein localises to the cytoplasm. Its function is as follows. The RecF protein is involved in DNA metabolism; it is required for DNA replication and normal SOS inducibility. RecF binds preferentially to single-stranded, linear DNA. It also seems to bind ATP. The protein is DNA replication and repair protein RecF of Shewanella piezotolerans (strain WP3 / JCM 13877).